The primary structure comprises 692 residues: Elongation factor G (692 aa).

The 276-residue stretch at 9 to 284 folds into the tr-type G domain; sequence HKVRNIGIAA…AVVDYLPAPD (276 aa). GTP contacts are provided by residues 18-25, 82-86, and 136-139; these read AHIDAGKT, DTPGH, and NKMD.

It belongs to the TRAFAC class translation factor GTPase superfamily. Classic translation factor GTPase family. EF-G/EF-2 subfamily.

The protein localises to the cytoplasm. Its function is as follows. Catalyzes the GTP-dependent ribosomal translocation step during translation elongation. During this step, the ribosome changes from the pre-translocational (PRE) to the post-translocational (POST) state as the newly formed A-site-bound peptidyl-tRNA and P-site-bound deacylated tRNA move to the P and E sites, respectively. Catalyzes the coordinated movement of the two tRNA molecules, the mRNA and conformational changes in the ribosome. This is Elongation factor G from Campylobacter concisus (strain 13826).